The primary structure comprises 421 residues: Solute carrier family 35 member F3 (421 aa).

Positions 25–45 (EGEERPRDSPGPAEAQAPAGV) are disordered. 10 helical membrane passes run 66 to 86 (IFWG…STQL), 98 to 118 (FTLT…YYVG), 149 to 169 (VFFT…YLYL), 179 to 199 (DVSV…WIVL), 208 to 228 (IVAA…DGFH), 232 to 252 (VIGI…KVLF), 266 to 286 (LFLS…PIIL), 305 to 325 (LCGF…GIAV), 326 to 346 (TYPT…AVID), and 352 to 372 (IVFN…FLLL). Residues 393 to 421 (KKEEPAEGAADLSSGPQSKNRRARPSFAR) form a disordered region. The span at 411–421 (KNRRARPSFAR) shows a compositional bias: basic residues.

The protein belongs to the SLC35F solute transporter family. In terms of tissue distribution, expressed at the highest levels in the adult cerebellum.

The protein resides in the membrane. It carries out the reaction thiamine(in) = thiamine(out). Functionally, mediates thiamine transport. The polypeptide is Solute carrier family 35 member F3 (Homo sapiens (Human)).